The chain runs to 328 residues: Nickel import system permease protein NikB (328 aa).

6 helical membrane passes run 11-31 (LMQMIVVLFVISTLTFILMKL), 104-124 (LLISFSTLVVSLCISIPLGII), 139-159 (VISTLSISLPAFFIGIILLFI), 170-190 (ILSQFILPVITLSLGMCAYII), 229-249 (ILPIIPLLGISLGSLIGGTVV), and 279-299 (VLFIGFFVVIINTIADLLTLL). The region spanning 100 to 297 (APITLLISFS…IINTIADLLT (198 aa)) is the ABC transmembrane type-1 domain.

This sequence belongs to the binding-protein-dependent transport system permease family. OppBC subfamily. As to quaternary structure, the complex is composed of two ATP-binding proteins (NikD and NikE), two transmembrane proteins (NikB and NikC) and a solute-binding protein (NikA).

The protein localises to the cell membrane. Functionally, part of the ABC transporter complex NikABCDE (Opp2) involved in nickel import. Probably responsible for the translocation of the substrate across the membrane. This Staphylococcus aureus (strain USA300) protein is Nickel import system permease protein NikB.